A 415-amino-acid chain; its full sequence is Queuine tRNA-ribosyltransferase accessory subunit 2 (415 aa).

Zn(2+)-binding residues include Cys-351, Cys-353, Cys-356, and His-382.

This sequence belongs to the queuine tRNA-ribosyltransferase family. QTRT2 subfamily. In terms of assembly, heterodimer of a catalytic subunit QTRT1 and an accessory subunit QTRT2. Zn(2+) serves as cofactor.

Its subcellular location is the cytoplasm. It is found in the mitochondrion outer membrane. Its function is as follows. Non-catalytic subunit of the queuine tRNA-ribosyltransferase (TGT) that catalyzes the base-exchange of a guanine (G) residue with queuine (Q) at position 34 (anticodon wobble position) in tRNAs with GU(N) anticodons (tRNA-Asp, -Asn, -His and -Tyr), resulting in the hypermodified nucleoside queuosine (7-(((4,5-cis-dihydroxy-2-cyclopenten-1-yl)amino)methyl)-7-deazaguanosine). In Pongo abelii (Sumatran orangutan), this protein is Queuine tRNA-ribosyltransferase accessory subunit 2.